A 118-amino-acid chain; its full sequence is UPF0102 protein lpp3065 (118 aa).

This sequence belongs to the UPF0102 family.

This is UPF0102 protein lpp3065 from Legionella pneumophila (strain Paris).